A 325-amino-acid polypeptide reads, in one-letter code: Acetyl-coenzyme A carboxylase carboxyl transferase subunit beta (325 aa).

Residues 24–293 (LWIKCPDSGH…AEIEVVTPEP (270 aa)) enclose the CoA carboxyltransferase N-terminal domain.

It belongs to the AccD/PCCB family. In terms of assembly, acetyl-CoA carboxylase is a heterohexamer composed of biotin carboxyl carrier protein (AccB), biotin carboxylase (AccC) and two subunits each of ACCase subunit alpha (AccA) and ACCase subunit beta (AccD).

It is found in the cytoplasm. The enzyme catalyses N(6)-carboxybiotinyl-L-lysyl-[protein] + acetyl-CoA = N(6)-biotinyl-L-lysyl-[protein] + malonyl-CoA. It functions in the pathway lipid metabolism; malonyl-CoA biosynthesis; malonyl-CoA from acetyl-CoA: step 1/1. Component of the acetyl coenzyme A carboxylase (ACC) complex. Biotin carboxylase (BC) catalyzes the carboxylation of biotin on its carrier protein (BCCP) and then the CO(2) group is transferred by the transcarboxylase to acetyl-CoA to form malonyl-CoA. This is Acetyl-coenzyme A carboxylase carboxyl transferase subunit beta from Rhodopseudomonas palustris (strain BisA53).